Reading from the N-terminus, the 400-residue chain is Enoyl-[acyl-carrier-protein] reductase [NADH] (400 aa).

NAD(+) contacts are provided by residues 48–53 (GSSSGY), 74–75 (FE), 111–112 (DA), and 139–140 (LA). Tyrosine 225 is a substrate binding site. Residue tyrosine 235 is the Proton donor of the active site. Residues lysine 244 and 273 to 275 (VVT) each bind NAD(+).

Belongs to the TER reductase family. In terms of assembly, monomer.

The enzyme catalyses a 2,3-saturated acyl-[ACP] + NAD(+) = a (2E)-enoyl-[ACP] + NADH + H(+). The protein operates within lipid metabolism; fatty acid biosynthesis. Functionally, involved in the final reduction of the elongation cycle of fatty acid synthesis (FAS II). Catalyzes the reduction of a carbon-carbon double bond in an enoyl moiety that is covalently linked to an acyl carrier protein (ACP). In Shewanella woodyi (strain ATCC 51908 / MS32), this protein is Enoyl-[acyl-carrier-protein] reductase [NADH].